The chain runs to 61 residues: Small ribosomal subunit protein uS14 (61 aa).

The Zn(2+) site is built by Cys-24, Cys-27, Cys-40, and Cys-43.

It belongs to the universal ribosomal protein uS14 family. Zinc-binding uS14 subfamily. Part of the 30S ribosomal subunit. Contacts proteins S3 and S10. The cofactor is Zn(2+).

Its function is as follows. Binds 16S rRNA, required for the assembly of 30S particles and may also be responsible for determining the conformation of the 16S rRNA at the A site. The polypeptide is Small ribosomal subunit protein uS14 (Desulfovibrio desulfuricans (strain ATCC 27774 / DSM 6949 / MB)).